A 727-amino-acid chain; its full sequence is ADP-ribosylation factor-binding protein GGA3 (727 aa).

One can recognise a VHS domain in the interval 16 to 146; it reads ATNPSNRQED…MLKRQGIVQS (131 aa). Serine 159 and serine 275 each carry phosphoserine. In terms of domain architecture, GAT spans 171–298; the sequence is DEEKSKLLAK…VINSYKTIIE (128 aa). Residues 299 to 597 are unstructured hinge; the sequence is GQIINGEVTT…VHVPLESIKP (299 aa). Residues 334–385 form a disordered region; it reads TPSSSSPVLAPAPAPPTSGIPILPPPPQTSGPPRSRSSSQAEAPSGPDSTNN. The segment covering 343–363 has biased composition (pro residues); that stretch reads APAPAPPTSGIPILPPPPQTS. Residues 364–374 show a composition bias toward low complexity; that stretch reads GPPRSRSSSQA. Residues 391-395 carry the DXXLL motif; the sequence is DEELL. The tract at residues 400-419 is disordered; it reads SDPAPTAPKESAGNSPWHLF. The 122-residue stretch at 598–719 folds into the GAE domain; the sequence is SSALPVTAYD…TELGEVDQFP (122 aa).

This sequence belongs to the GGA protein family. As to quaternary structure, monomer. Interacts with GGA1 and GGA2. Binds to clathrin and activated ARFs, such as ARF1, ARF5 and ARF6. Binds RABEP1 and RABGEF1. Interacts with the membrane proteins M6PR/CD-MPR and IGF2R/CI-MPR and the accessory proteins SYNRG, EPN4, NECAP1, NECAP2 and AFTPH/aftiphilin. Interacts with TSG101 and UBC. Interacts with ADRA2B. Interacts with NTRK1; the interaction is independent of NTRK1 activation and ubiquitination. Interacts (via VHS domain) with BACE1 (via DXXLL motif). In terms of processing, phosphorylated by CK2 and dephosphorylated by PP2A. Phosphorylation of GGA3 allows the internal DXXLL motif to bind the VHS domain and to inhibit the recognition of cargo signals. Post-translationally, ubiquitinated. Proteolytically cleaved during apoptosis by CASP3.

The protein resides in the golgi apparatus. It is found in the trans-Golgi network membrane. It localises to the endosome membrane. Its subcellular location is the early endosome membrane. The protein localises to the recycling endosome membrane. Plays a role in protein sorting and trafficking between the trans-Golgi network (TGN) and endosomes. Mediates the ARF-dependent recruitment of clathrin to the TGN and binds ubiquitinated proteins and membrane cargo molecules with a cytosolic acidic cluster-dileucine (DXXLL) motif. Mediates export of the GPCR receptor ADRA2B to the cell surface. Involved in BACE1 transport and sorting as well as regulation of BACE1 protein levels. Regulates retrograde transport of BACE1 from endosomes to the trans-Golgi network via interaction through the VHS motif and dependent of BACE1 phosphorylation. Modulates BACE1 protein levels independently of the interaction between VHS domain and DXXLL motif through recognition of ubiquitination. Key player in a novel DXXLL-mediated endosomal sorting machinery to the recycling pathway that targets NTRK1 to the plasma membrane. This is ADP-ribosylation factor-binding protein GGA3 from Rattus norvegicus (Rat).